Consider the following 451-residue polypeptide: Proline--tRNA ligase (451 aa).

The protein belongs to the class-II aminoacyl-tRNA synthetase family. ProS type 2 subfamily. As to quaternary structure, homodimer.

The protein localises to the cytoplasm. The catalysed reaction is tRNA(Pro) + L-proline + ATP = L-prolyl-tRNA(Pro) + AMP + diphosphate. Functionally, catalyzes the attachment of proline to tRNA(Pro) in a two-step reaction: proline is first activated by ATP to form Pro-AMP and then transferred to the acceptor end of tRNA(Pro). This Ruegeria sp. (strain TM1040) (Silicibacter sp.) protein is Proline--tRNA ligase.